A 619-amino-acid chain; its full sequence is Dihydroxy-acid dehydratase (619 aa).

Residue Asp81 coordinates Mg(2+). [2Fe-2S] cluster is bound at residue Cys122. Positions 123 and 124 each coordinate Mg(2+). Position 124 is an N6-carboxylysine (Lys124). Cys195 serves as a coordination point for [2Fe-2S] cluster. Glu494 provides a ligand contact to Mg(2+). The Proton acceptor role is filled by Ser520.

The protein belongs to the IlvD/Edd family. As to quaternary structure, homodimer. It depends on [2Fe-2S] cluster as a cofactor. The cofactor is Mg(2+).

The catalysed reaction is (2R)-2,3-dihydroxy-3-methylbutanoate = 3-methyl-2-oxobutanoate + H2O. The enzyme catalyses (2R,3R)-2,3-dihydroxy-3-methylpentanoate = (S)-3-methyl-2-oxopentanoate + H2O. It functions in the pathway amino-acid biosynthesis; L-isoleucine biosynthesis; L-isoleucine from 2-oxobutanoate: step 3/4. Its pathway is amino-acid biosynthesis; L-valine biosynthesis; L-valine from pyruvate: step 3/4. Functionally, functions in the biosynthesis of branched-chain amino acids. Catalyzes the dehydration of (2R,3R)-2,3-dihydroxy-3-methylpentanoate (2,3-dihydroxy-3-methylvalerate) into 2-oxo-3-methylpentanoate (2-oxo-3-methylvalerate) and of (2R)-2,3-dihydroxy-3-methylbutanoate (2,3-dihydroxyisovalerate) into 2-oxo-3-methylbutanoate (2-oxoisovalerate), the penultimate precursor to L-isoleucine and L-valine, respectively. This is Dihydroxy-acid dehydratase from Shewanella oneidensis (strain ATCC 700550 / JCM 31522 / CIP 106686 / LMG 19005 / NCIMB 14063 / MR-1).